The chain runs to 294 residues: Acetylglutamate kinase (294 aa).

Residues 67 to 68 (GG), Arg89, and Asn191 contribute to the substrate site.

It belongs to the acetylglutamate kinase family. ArgB subfamily.

The protein localises to the cytoplasm. The catalysed reaction is N-acetyl-L-glutamate + ATP = N-acetyl-L-glutamyl 5-phosphate + ADP. It participates in amino-acid biosynthesis; L-arginine biosynthesis; N(2)-acetyl-L-ornithine from L-glutamate: step 2/4. In terms of biological role, catalyzes the ATP-dependent phosphorylation of N-acetyl-L-glutamate. The sequence is that of Acetylglutamate kinase from Methylobacillus flagellatus (strain ATCC 51484 / DSM 6875 / VKM B-1610 / KT).